A 91-amino-acid polypeptide reads, in one-letter code: YcgL domain-containing protein Sde_1339 (91 aa).

Residues 1–85 (MIVDIYRSAK…PPESYMNEIP (85 aa)) enclose the YcgL domain. A disordered region spans residues 72-91 (QMPPPPESYMNEIPNDKMPR).

The polypeptide is YcgL domain-containing protein Sde_1339 (Saccharophagus degradans (strain 2-40 / ATCC 43961 / DSM 17024)).